The following is a 615-amino-acid chain: Elongation factor 4 (615 aa).

Positions 14-200 (SRIRNFCIIA…KVVELIPAPS (187 aa)) constitute a tr-type G domain. GTP-binding positions include 26–31 (DHGKST) and 147–150 (NKID).

The protein belongs to the TRAFAC class translation factor GTPase superfamily. Classic translation factor GTPase family. LepA subfamily.

Its subcellular location is the cell membrane. The enzyme catalyses GTP + H2O = GDP + phosphate + H(+). Functionally, required for accurate and efficient protein synthesis under certain stress conditions. May act as a fidelity factor of the translation reaction, by catalyzing a one-codon backward translocation of tRNAs on improperly translocated ribosomes. Back-translocation proceeds from a post-translocation (POST) complex to a pre-translocation (PRE) complex, thus giving elongation factor G a second chance to translocate the tRNAs correctly. Binds to ribosomes in a GTP-dependent manner. In Corynebacterium efficiens (strain DSM 44549 / YS-314 / AJ 12310 / JCM 11189 / NBRC 100395), this protein is Elongation factor 4.